The chain runs to 86 residues: UPF0457 protein SAUSA300_2132 (86 aa).

It belongs to the UPF0457 family.

This is UPF0457 protein SAUSA300_2132 from Staphylococcus aureus (strain USA300).